The following is a 282-amino-acid chain: Phosphatidylglycerol--prolipoprotein diacylglyceryl transferase (282 aa).

Helical transmembrane passes span 19–39, 59–79, 90–110, and 120–140; these read IGPI…LIGV, LSIW…VLFQ, IIAI…GTLA, and VPFW…QAIG. A 1,2-diacyl-sn-glycero-3-phospho-(1'-sn-glycerol) is bound at residue arginine 141. 3 helical membrane-spanning segments follow: residues 181–201, 212–232, and 245–265; these read TFLY…TLFF, VGTL…WIEG, and IAQV…AWLY.

It belongs to the Lgt family.

The protein resides in the cell inner membrane. The catalysed reaction is L-cysteinyl-[prolipoprotein] + a 1,2-diacyl-sn-glycero-3-phospho-(1'-sn-glycerol) = an S-1,2-diacyl-sn-glyceryl-L-cysteinyl-[prolipoprotein] + sn-glycerol 1-phosphate + H(+). The protein operates within protein modification; lipoprotein biosynthesis (diacylglyceryl transfer). Its function is as follows. Catalyzes the transfer of the diacylglyceryl group from phosphatidylglycerol to the sulfhydryl group of the N-terminal cysteine of a prolipoprotein, the first step in the formation of mature lipoproteins. The polypeptide is Phosphatidylglycerol--prolipoprotein diacylglyceryl transferase (Trichormus variabilis (strain ATCC 29413 / PCC 7937) (Anabaena variabilis)).